A 343-amino-acid chain; its full sequence is N-acetyl-gamma-glutamyl-phosphate reductase (343 aa).

The active site involves Cys148.

The protein belongs to the NAGSA dehydrogenase family. Type 1 subfamily.

It localises to the cytoplasm. The catalysed reaction is N-acetyl-L-glutamate 5-semialdehyde + phosphate + NADP(+) = N-acetyl-L-glutamyl 5-phosphate + NADPH + H(+). Its pathway is amino-acid biosynthesis; L-arginine biosynthesis; N(2)-acetyl-L-ornithine from L-glutamate: step 3/4. Catalyzes the NADPH-dependent reduction of N-acetyl-5-glutamyl phosphate to yield N-acetyl-L-glutamate 5-semialdehyde. The protein is N-acetyl-gamma-glutamyl-phosphate reductase of Caldicellulosiruptor bescii (strain ATCC BAA-1888 / DSM 6725 / KCTC 15123 / Z-1320) (Anaerocellum thermophilum).